The following is a 449-amino-acid chain: Packaging protein 1 (449 aa).

A disordered region spans residues 1–78 (METRGRRPAA…PAKRGDMLDR (78 aa)). 171–178 (GPTGCGKS) serves as a coordination point for ATP. Residues 440–449 (RAYRARKTPK) are DNA-binding.

This sequence belongs to the adenoviridae packaging protein 1 family. Homodimer. Part of a genome packaging complex composed of packaging proteins 1, 2 and 3; this complex specifically binds to the packaging sequence on the left end of viral genomic DNA and performs packaging of the viral genome. Interacts with protein 33K.

It is found in the virion. Its subcellular location is the host nucleus. The protein localises to the host nucleoplasm. The protein resides in the host nucleolus. Its function is as follows. Component of the packaging machinery which encapsidates the viral DNA into preformed capsids and transcriptional activator of the viral major late promoter (MLP). Binds, along with packaging proteins 2 and 3, to the specific packaging sequence on the left end of viral genomic DNA and displays ATPase activity thereby providing the power stroke of the packaging machinery. The activity of packaging protein IVa2 is stimulated by protein 33K which acts as a terminase. May be the protein that pumps DNA into the capsid powered by ATP hydrolysis. Specifically binds to the 5'-CG-3' nucleotides of the repeats making up the packaging sequence. Component of the DEF-A and DEF-B transcription factors that bind downstream elements of the major late promoter (MLP), and stimulate transcription from the MLP after initiation of viral DNA replication. DEF-A is a heterodimer packaging proteins 1 and 2 and DEF-B is a homodimer of packaging protein 1. The chain is Packaging protein 1 from Human adenovirus C serotype 5 (HAdV-5).